The sequence spans 243 residues: 1-(5-phosphoribosyl)-5-[(5-phosphoribosylamino)methylideneamino] imidazole-4-carboxamide isomerase (243 aa).

Asp-8 functions as the Proton acceptor in the catalytic mechanism. Asp-130 functions as the Proton donor in the catalytic mechanism.

The protein belongs to the HisA/HisF family.

Its subcellular location is the cytoplasm. It catalyses the reaction 1-(5-phospho-beta-D-ribosyl)-5-[(5-phospho-beta-D-ribosylamino)methylideneamino]imidazole-4-carboxamide = 5-[(5-phospho-1-deoxy-D-ribulos-1-ylimino)methylamino]-1-(5-phospho-beta-D-ribosyl)imidazole-4-carboxamide. It participates in amino-acid biosynthesis; L-histidine biosynthesis; L-histidine from 5-phospho-alpha-D-ribose 1-diphosphate: step 4/9. In Acinetobacter baumannii (strain SDF), this protein is 1-(5-phosphoribosyl)-5-[(5-phosphoribosylamino)methylideneamino] imidazole-4-carboxamide isomerase.